The sequence spans 103 residues: Small ribosomal subunit protein uS10 (103 aa).

This sequence belongs to the universal ribosomal protein uS10 family. Part of the 30S ribosomal subunit.

Its function is as follows. Involved in the binding of tRNA to the ribosomes. In Salinibacter ruber (strain DSM 13855 / M31), this protein is Small ribosomal subunit protein uS10.